Here is a 96-residue protein sequence, read N- to C-terminus: Uteroglobin (96 aa).

A signal peptide spans 1-21; it reads MKIAITMAVVMLSVCCSSASS.

This sequence belongs to the secretoglobin family. In terms of assembly, antiparallel homodimer; disulfide-linked. Interaction with LMBR1L is controversial.

The protein localises to the secreted. Functionally, binds phosphatidylcholine, phosphatidylinositol, polychlorinated biphenyls (PCB) and weakly progesterone, potent inhibitor of phospholipase A2. The polypeptide is Uteroglobin (SCGB1A1) (Mesocricetus auratus (Golden hamster)).